The sequence spans 349 residues: uncharacterized protein (349 aa).

Residues 1 to 29 (MKQKYENYFKKRLILNLLIFLLLACSSES) form the signal peptide.

This is an uncharacterized protein from Borreliella burgdorferi (strain ATCC 35210 / DSM 4680 / CIP 102532 / B31) (Borrelia burgdorferi).